We begin with the raw amino-acid sequence, 22 residues long: Caerin-3.4 (22 aa).

K22 is subject to Lysine amide.

As to expression, expressed by the skin parotoid and/or rostral glands.

It localises to the secreted. Antibacterial peptide, that adopts an alpha helical conformation which can disrupt bacterial membranes. Each caerin displays a different antimicrobial specificity. The sequence is that of Caerin-3.4 from Ranoidea caerulea (Green tree frog).